The chain runs to 551 residues: uncharacterized protein (551 aa).

Disordered stretches follow at residues 66–111 (GNNK…STNL), 130–165 (PEATGLMKEDITPVVNTSKQSSTGTQEESSKPEKSN), 180–229 (AFNP…LSNL), and 277–303 (AFTSPRLPSPPQSTRPSSTRFPSVPLS). Ser-74 carries the post-translational modification Phosphoserine. Polar residues-rich tracts occupy residues 92 to 111 (GFSNRESMSENCFSKSSTNL) and 143 to 156 (VVNTSKQSSTGTQE). Over residues 182–193 (NPSSVLPSNSSS) the composition is skewed to low complexity. Positions 204–226 (KETYQPNTFRRSPLKNDTGSVEL) are enriched in polar residues. Residues 290–299 (TRPSSTRFPS) show a composition bias toward low complexity.

This is an uncharacterized protein from Schizosaccharomyces pombe (strain 972 / ATCC 24843) (Fission yeast).